The sequence spans 449 residues: Packaging protein 1 (449 aa).

A disordered region spans residues 1–77 (METRGRRPAA…QPAKRGDMLD (77 aa)). 171-178 (GPTGCGKS) is an ATP binding site. The segment at 440 to 449 (RAYRARKTPK) is DNA-binding.

This sequence belongs to the adenoviridae packaging protein 1 family. As to quaternary structure, homodimer. Part of a genome packaging complex composed of packaging proteins 1, 2 and 3; this complex specifically binds to the packaging sequence on the left end of viral genomic DNA and performs packaging of the viral genome. Interacts with protein 33K.

It localises to the virion. Its subcellular location is the host nucleus. It is found in the host nucleoplasm. The protein resides in the host nucleolus. Functionally, component of the packaging machinery which encapsidates the viral DNA into preformed capsids and transcriptional activator of the viral major late promoter (MLP). Binds, along with packaging proteins 2 and 3, to the specific packaging sequence on the left end of viral genomic DNA and displays ATPase activity thereby providing the power stroke of the packaging machinery. The activity of packaging protein IVa2 is stimulated by protein 33K which acts as a terminase. May be the protein that pumps DNA into the capsid powered by ATP hydrolysis. Specifically binds to the 5'-CG-3' nucleotides of the repeats making up the packaging sequence. Component of the DEF-A and DEF-B transcription factors that bind downstream elements of the major late promoter (MLP), and stimulate transcription from the MLP after initiation of viral DNA replication. DEF-A is a heterodimer packaging proteins 1 and 2 and DEF-B is a homodimer of packaging protein 1. This Homo sapiens (Human) protein is Packaging protein 1.